The sequence spans 380 residues: Alcohol dehydrogenase 1 (380 aa).

8 residues coordinate Zn(2+): Cys-48, Thr-50, His-70, Cys-100, Cys-103, Cys-106, Cys-114, and Cys-178. An alcohol contacts are provided by Thr-50 and His-70. Thr-50 is a binding site for NAD(+). Residues 203 to 208 (GLGAVG), Asp-227, Arg-232, Thr-273, Val-296, 296 to 298 (VGV), Phe-323, and Arg-373 each bind NAD(+).

This sequence belongs to the zinc-containing alcohol dehydrogenase family. In terms of assembly, homodimer. Homotetramer. It depends on Zn(2+) as a cofactor.

The protein localises to the cytoplasm. The enzyme catalyses a primary alcohol + NAD(+) = an aldehyde + NADH + H(+). It catalyses the reaction a secondary alcohol + NAD(+) = a ketone + NADH + H(+). This is Alcohol dehydrogenase 1 (ADH1) from Solanum tuberosum (Potato).